The chain runs to 202 residues: ATP-dependent Clp protease proteolytic subunit (202 aa).

The Nucleophile role is filled by serine 106. Histidine 131 is an active-site residue.

The protein belongs to the peptidase S14 family. As to quaternary structure, fourteen ClpP subunits assemble into 2 heptameric rings which stack back to back to give a disk-like structure with a central cavity, resembling the structure of eukaryotic proteasomes.

It localises to the cytoplasm. It carries out the reaction Hydrolysis of proteins to small peptides in the presence of ATP and magnesium. alpha-casein is the usual test substrate. In the absence of ATP, only oligopeptides shorter than five residues are hydrolyzed (such as succinyl-Leu-Tyr-|-NHMec, and Leu-Tyr-Leu-|-Tyr-Trp, in which cleavage of the -Tyr-|-Leu- and -Tyr-|-Trp bonds also occurs).. Functionally, cleaves peptides in various proteins in a process that requires ATP hydrolysis. Has a chymotrypsin-like activity. Plays a major role in the degradation of misfolded proteins. This Shewanella oneidensis (strain ATCC 700550 / JCM 31522 / CIP 106686 / LMG 19005 / NCIMB 14063 / MR-1) protein is ATP-dependent Clp protease proteolytic subunit.